Here is a 236-residue protein sequence, read N- to C-terminus: 2-C-methyl-D-erythritol 4-phosphate cytidylyltransferase (236 aa).

Belongs to the IspD/TarI cytidylyltransferase family. IspD subfamily. In terms of assembly, homodimer.

It carries out the reaction 2-C-methyl-D-erythritol 4-phosphate + CTP + H(+) = 4-CDP-2-C-methyl-D-erythritol + diphosphate. It functions in the pathway isoprenoid biosynthesis; isopentenyl diphosphate biosynthesis via DXP pathway; isopentenyl diphosphate from 1-deoxy-D-xylulose 5-phosphate: step 2/6. Functionally, catalyzes the formation of 4-diphosphocytidyl-2-C-methyl-D-erythritol from CTP and 2-C-methyl-D-erythritol 4-phosphate (MEP). This chain is 2-C-methyl-D-erythritol 4-phosphate cytidylyltransferase, found in Escherichia coli O157:H7.